The following is a 256-amino-acid chain: Doublecortin domain-containing protein (256 aa).

The interval 71-103 (NVFERLTDTAYYTGSHRERFDEFGNGRGIAGRE) is partial p25alpha domain. One can recognise a Doublecortin domain in the interval 152 to 226 (RLMWLYRNGD…AKYLCTSGEP (75 aa)).

The protein resides in the cytoplasm. It is found in the cytoskeleton. Its function is as follows. Specifically required in the formation and maintenance of the conoid fibers; the conoid is a component of the cytoskeletal apical complex, which is composed of a left-handed spiral of 14 fibers made from a nontubular tubulin polymer. Promotes the organization, curvature, and stability of the conoid fibers, and probably bridges other conoid components to the tubulin core. This Toxoplasma gondii (strain ATCC 50861 / VEG) protein is Doublecortin domain-containing protein.